Here is a 312-residue protein sequence, read N- to C-terminus: TATA box-binding protein-like 2 (312 aa).

Residues 65–115 (DELSTQDEPSQVEKESKNEDSGIYTDCPQKESTQADIDTSNSAQNTSQFNL) form a disordered region. Residues 75 to 84 (QVEKESKNED) are compositionally biased toward basic and acidic residues. Residues 94–115 (KESTQADIDTSNSAQNTSQFNL) show a composition bias toward polar residues.

This sequence belongs to the TBP family. As to expression, in adults, expressed in the gonads, with expression much higher in the ovary than the testis (at protein level). Shows a small amount of expression in other adult organs, including the brain and kidney. Embryonic expression is mostly ubiquitous except in early gastrula embryos where expression is asymmetric.

The protein resides in the nucleus. TATA box-binding transcription factor. Members of the TBP family are differentially required to regulate transcription and development during early embryogenesis. Commits mesoderm to the hematopoietic lineage during hemopoiesis, acting via mespa. Binds to the mespa promoter. The polypeptide is TATA box-binding protein-like 2 (Danio rerio (Zebrafish)).